A 199-amino-acid polypeptide reads, in one-letter code: dITP/XTP pyrophosphatase (199 aa).

Residue 9–14 (TGNKGK) coordinates substrate. Residues Glu-41 and Asp-70 each coordinate Mg(2+). The Proton acceptor role is filled by Asp-70. Substrate is bound by residues Ser-71, 157 to 160 (FGYD), Lys-180, and 185 to 186 (HR).

The protein belongs to the HAM1 NTPase family. In terms of assembly, homodimer. It depends on Mg(2+) as a cofactor.

It carries out the reaction XTP + H2O = XMP + diphosphate + H(+). It catalyses the reaction dITP + H2O = dIMP + diphosphate + H(+). The enzyme catalyses ITP + H2O = IMP + diphosphate + H(+). Pyrophosphatase that catalyzes the hydrolysis of nucleoside triphosphates to their monophosphate derivatives, with a high preference for the non-canonical purine nucleotides XTP (xanthosine triphosphate), dITP (deoxyinosine triphosphate) and ITP. Seems to function as a house-cleaning enzyme that removes non-canonical purine nucleotides from the nucleotide pool, thus preventing their incorporation into DNA/RNA and avoiding chromosomal lesions. The sequence is that of dITP/XTP pyrophosphatase from Mannheimia succiniciproducens (strain KCTC 0769BP / MBEL55E).